The chain runs to 236 residues: Ribose-5-phosphate isomerase A (236 aa).

Substrate is bound by residues 28-31, 83-86, and 96-99; these read TGST, DGAD, and KGGG. Glutamate 105 acts as the Proton acceptor in catalysis. Lysine 123 serves as a coordination point for substrate.

Belongs to the ribose 5-phosphate isomerase family. In terms of assembly, homodimer.

It carries out the reaction aldehydo-D-ribose 5-phosphate = D-ribulose 5-phosphate. Its pathway is carbohydrate degradation; pentose phosphate pathway; D-ribose 5-phosphate from D-ribulose 5-phosphate (non-oxidative stage): step 1/1. Its function is as follows. Catalyzes the reversible conversion of ribose-5-phosphate to ribulose 5-phosphate. In Methylorubrum extorquens (strain CM4 / NCIMB 13688) (Methylobacterium extorquens), this protein is Ribose-5-phosphate isomerase A.